The primary structure comprises 500 residues: Glutamyl-tRNA(Gln) amidotransferase subunit A (500 aa).

Active-site charge relay system residues include Lys93 and Ser168. The Acyl-ester intermediate role is filled by Ser192.

It belongs to the amidase family. GatA subfamily. Heterotrimer of A, B and C subunits.

It catalyses the reaction L-glutamyl-tRNA(Gln) + L-glutamine + ATP + H2O = L-glutaminyl-tRNA(Gln) + L-glutamate + ADP + phosphate + H(+). Functionally, allows the formation of correctly charged Gln-tRNA(Gln) through the transamidation of misacylated Glu-tRNA(Gln) in organisms which lack glutaminyl-tRNA synthetase. The reaction takes place in the presence of glutamine and ATP through an activated gamma-phospho-Glu-tRNA(Gln). In Corynebacterium jeikeium (strain K411), this protein is Glutamyl-tRNA(Gln) amidotransferase subunit A.